Reading from the N-terminus, the 205-residue chain is Allergen Asp f 15 homolog (205 aa).

Belongs to the cerato-platanin family.

Its subcellular location is the secreted. The chain is Allergen Asp f 15 homolog from Arthroderma benhamiae (strain ATCC MYA-4681 / CBS 112371) (Trichophyton mentagrophytes).